A 236-amino-acid polypeptide reads, in one-letter code: MTTQELNVDSAEIAKFERLAARWWDLEGEFKPLHDLNPLRANYIDERAQVAEKKLLDVGCGGGILCEAMAQRGAIVTGIDMGDAPLEVAKLHSLESGVNVDYIKTTAEEFAAKHPQSYDVVTCLEMLEHVPDPAQTIAACAQLVKPGGDIFFSTINRNPKAYLFAVVGAEYVLKMLPKGTHDYNKFIRPSELAQWMRNAGLELQEMCGMTYNPITKHYKLNAKDVSVNYIMHARKI.

S-adenosyl-L-methionine-binding residues include Arg40, Gly59, Asp80, and Leu124.

It belongs to the methyltransferase superfamily. UbiG/COQ3 family.

The catalysed reaction is a 3-demethylubiquinol + S-adenosyl-L-methionine = a ubiquinol + S-adenosyl-L-homocysteine + H(+). The enzyme catalyses a 3-(all-trans-polyprenyl)benzene-1,2-diol + S-adenosyl-L-methionine = a 2-methoxy-6-(all-trans-polyprenyl)phenol + S-adenosyl-L-homocysteine + H(+). Its pathway is cofactor biosynthesis; ubiquinone biosynthesis. In terms of biological role, O-methyltransferase that catalyzes the 2 O-methylation steps in the ubiquinone biosynthetic pathway. This Saccharophagus degradans (strain 2-40 / ATCC 43961 / DSM 17024) protein is Ubiquinone biosynthesis O-methyltransferase.